Here is a 926-residue protein sequence, read N- to C-terminus: Lipoxygenase 4, chloroplastic (926 aa).

A chloroplast-targeting transit peptide spans 1 to 58 (MALANEIMGSRLIFERSSSLASPFHSRFSIKKKTQRTQFSINPFDPRPMRAVNSSGVV). Residues 106–228 (FKETLVKHLD…DHPSKRILFT (123 aa)) form the PLAT domain. The region spanning 231–926 (PYLPSETPSG…CRGVPNSVSI (696 aa)) is the Lipoxygenase domain. Positions 585, 590, 777, 781, and 926 each coordinate Fe cation.

It belongs to the lipoxygenase family. The cofactor is Fe cation. In terms of tissue distribution, expressed in leaves.

It is found in the plastid. Its subcellular location is the chloroplast. It carries out the reaction (9Z,12Z)-octadecadienoate + O2 = (13S)-hydroperoxy-(9Z,11E)-octadecadienoate. It catalyses the reaction (9Z,12Z,15Z)-octadecatrienoate + O2 = (13S)-hydroperoxy-(9Z,11E,15Z)-octadecatrienoate. It functions in the pathway lipid metabolism; oxylipin biosynthesis. Functionally, plant lipoxygenases may be involved in a number of diverse aspects of plant physiology including growth and development, pest resistance, and senescence or responses to wounding. Catalyzes the hydroperoxidation of lipids containing a cis,cis-1,4-pentadiene structure. 13S-lipoxygenase that can use linolenic acid as substrates. This is Lipoxygenase 4, chloroplastic (LOX4) from Arabidopsis thaliana (Mouse-ear cress).